Here is an 84-residue protein sequence, read N- to C-terminus: Small ribosomal subunit protein uS17 (84 aa).

This sequence belongs to the universal ribosomal protein uS17 family. Part of the 30S ribosomal subunit.

Functionally, one of the primary rRNA binding proteins, it binds specifically to the 5'-end of 16S ribosomal RNA. The polypeptide is Small ribosomal subunit protein uS17 (Ureaplasma parvum serovar 3 (strain ATCC 27815 / 27 / NCTC 11736)).